The following is a 459-amino-acid chain: Putative flavin-containing monooxygenase 2 (459 aa).

Residues 17–21 (GAGVS), Glu-38, and 46–47 (VW) each bind FAD. Residue 217–220 (SAID) participates in NADP(+) binding.

Belongs to the FMO family. FAD serves as cofactor.

The protein is Putative flavin-containing monooxygenase 2 (FMO2) of Arabidopsis thaliana (Mouse-ear cress).